A 155-amino-acid polypeptide reads, in one-letter code: S-ribosylhomocysteine lyase (155 aa).

Fe cation contacts are provided by His58, His62, and Cys125.

The protein belongs to the LuxS family. As to quaternary structure, homodimer. It depends on Fe cation as a cofactor.

The enzyme catalyses S-(5-deoxy-D-ribos-5-yl)-L-homocysteine = (S)-4,5-dihydroxypentane-2,3-dione + L-homocysteine. Its function is as follows. Involved in the synthesis of autoinducer 2 (AI-2) which is secreted by bacteria and is used to communicate both the cell density and the metabolic potential of the environment. The regulation of gene expression in response to changes in cell density is called quorum sensing. Catalyzes the transformation of S-ribosylhomocysteine (RHC) to homocysteine (HC) and 4,5-dihydroxy-2,3-pentadione (DPD). This Helicobacter pylori (strain P12) protein is S-ribosylhomocysteine lyase.